Consider the following 127-residue polypeptide: Tyrosine-protein phosphatase 2 (127 aa).

In terms of domain architecture, Tyrosine-protein phosphatase spans 1 to 127 (QGSKVIVMVT…PRDCEAPILV (127 aa)). The segment covering 63–81 (VYDNDDGTEQNDEQTEEEP) has biased composition (acidic residues). The tract at residues 63 to 82 (VYDNDDGTEQNDEQTEEEPE) is disordered.

This sequence belongs to the protein-tyrosine phosphatase family.

It catalyses the reaction O-phospho-L-tyrosyl-[protein] + H2O = L-tyrosyl-[protein] + phosphate. The polypeptide is Tyrosine-protein phosphatase 2 (STY-2) (Styela plicata (Wrinkled sea squirt)).